The chain runs to 206 residues: Triafestin-2 (206 aa).

The signal sequence occupies residues 1-18; that stretch reads MKTILAVIFFGILAFAFA. N-linked (GlcNAc...) asparagine glycosylation is found at N25, N55, and N178.

This sequence belongs to the calycin superfamily. Triabin family. As to quaternary structure, interacts with host coagulation factor XII (F12) (inactive and activated) (via amino acids 1-77). Interacts with host high molecular weight kininogen (KNG1) (via amino acids 402-532). Salivary gland (at protein level).

The protein resides in the secreted. With respect to regulation, zn(2+) modulates binding to host coagulation factor XII (F12) and high molecular weight kininogen (KNG1). Functionally, suppresses activation of the host plasma kallikrein-kinin system, leading to inhibition of the intrinsic coagulation pathway. Blocks host coagulation factor XII (F12) and prekallikrein (KLKB1) reciprocal activation without affecting their amidolytic activities. Blocks binding of host F12 and high molecular weight kininogen (KNG1) to negatively charged surfaces. Attenuates generation of bradykinin by interfering with activation of host kallikrein-kinin system. In Triatoma infestans (Assassin bug), this protein is Triafestin-2.